The chain runs to 340 residues: Glycerol-3-phosphate dehydrogenase [NAD(P)+] (340 aa).

S14, F15, R35, and K108 together coordinate NADPH. 2 residues coordinate sn-glycerol 3-phosphate: K108 and G136. A140 is a binding site for NADPH. Positions 191, 244, 254, 255, and 256 each coordinate sn-glycerol 3-phosphate. Residue K191 is the Proton acceptor of the active site. R255 serves as a coordination point for NADPH. NADPH-binding residues include V279 and E281.

The protein belongs to the NAD-dependent glycerol-3-phosphate dehydrogenase family.

The protein localises to the cytoplasm. The catalysed reaction is sn-glycerol 3-phosphate + NAD(+) = dihydroxyacetone phosphate + NADH + H(+). It carries out the reaction sn-glycerol 3-phosphate + NADP(+) = dihydroxyacetone phosphate + NADPH + H(+). The protein operates within membrane lipid metabolism; glycerophospholipid metabolism. Functionally, catalyzes the reduction of the glycolytic intermediate dihydroxyacetone phosphate (DHAP) to sn-glycerol 3-phosphate (G3P), the key precursor for phospholipid synthesis. The polypeptide is Glycerol-3-phosphate dehydrogenase [NAD(P)+] (Azotobacter vinelandii (strain DJ / ATCC BAA-1303)).